The chain runs to 729 residues: Solute carrier family 15 member 2 (729 aa).

The disordered stretch occupies residues 1–35; that stretch reads MNPFQKNESKETLFSPVSTEEMLPRPPSPPKKSPP. The Cytoplasmic portion of the chain corresponds to 1-57; that stretch reads MNPFQKNESKETLFSPVSTEEMLPRPPSPPKKSPPKIFGSSYPVSIAFIVVNEFCER. Phosphoserine is present on Ser-9. Thr-12 is modified (phosphothreonine). Residue Ser-28 is modified to Phosphoserine. A helical membrane pass occupies residues 58–78; it reads FSYYGMKAVLTLYFLYFLHWN. Over 79–87 the chain is Extracellular; sequence EDTSTSVYH. A helical membrane pass occupies residues 88–108; sequence AFSSLCYFTPILGAAIADSWL. The Cytoplasmic segment spans residues 109–113; sequence GKFKT. A helical transmembrane segment spans residues 114–134; the sequence is IIYLSLVYVLGHVFKSLGAIP. Residues 135–139 are Extracellular-facing; that stretch reads ILGGK. The helical transmembrane segment at 140 to 160 threads the bilayer; it reads MLHTILSLVGLSLIALGTGGI. Over 161–183 the chain is Cytoplasmic; the sequence is KPCVAAFGGDQFEEEHAEARTRY. Residues 184 to 204 form a helical membrane-spanning segment; it reads FSVFYLAINAGSLISTFITPM. Residues 205–217 lie on the Extracellular side of the membrane; it reads LRGDVKCFGQDCY. The helical transmembrane segment at 218 to 238 threads the bilayer; it reads ALAFGVPGLLMVLALVVFAMG. The Cytoplasmic portion of the chain corresponds to 239-295; that stretch reads SKMYRKPPPEGNIVAQVIKCIWFALCNRFRNRSGDLPKRQHWLDWAAEKYPKHLIAD. A helical membrane pass occupies residues 296-316; it reads VKALTRVLFLYIPLPMFWALL. The Extracellular segment spans residues 317-343; the sequence is DQQGSRWTLQANKMNGDLGFFVLQPDQ. Residues 344–364 form a helical membrane-spanning segment; it reads MQVLNPFLVLIFIPLFDLVIY. The Cytoplasmic portion of the chain corresponds to 365–380; it reads RLISKCRINFSSLRKM. The chain crosses the membrane as a helical span at residues 381 to 401; sequence AVGMILACLAFAVAALVETKI. The Extracellular portion of the chain corresponds to 402-611; sequence NGMIHPQPAS…PVNKLSIAWQ (210 aa). An extracellular domain (ECD) region spans residues 402 to 611; it reads NGMIHPQPAS…PVNKLSIAWQ (210 aa). Residues Asn-435, Asn-448, Asn-528, and Asn-587 are each glycosylated (N-linked (GlcNAc...) asparagine). A helical membrane pass occupies residues 612–632; the sequence is LPQYVLVTAAEVMFSVTGLEF. The Cytoplasmic portion of the chain corresponds to 633–643; sequence SYSQAPSSMKS. The chain crosses the membrane as a helical span at residues 644–664; it reads VLQAAWLLTVAVGNIIVLVVA. Topologically, residues 665-674 are extracellular; it reads QFSGLAQWAE. Residues 675–695 traverse the membrane as a helical segment; that stretch reads FVLFSCLLLVVCLIFSVMAYY. The Cytoplasmic segment spans residues 696–729; that stretch reads YVPLKSEDTREATDKQIPAVQGNMINLETKNTRL.

The protein belongs to the major facilitator superfamily. Proton-dependent oligopeptide transporter (POT/PTR) (TC 2.A.17) family. Interacts (via extracellular domain region) with trypsin. In terms of tissue distribution, strongly expressed in kidney cortex and medulla. Also detected in brain, lung and spleen. Expressed in choroid plexus.

The protein resides in the apical cell membrane. Its subcellular location is the cytoplasmic vesicle. It localises to the phagosome membrane. The protein localises to the cell membrane. It catalyses the reaction a dipeptide(out) + 2 H(+)(out) = a dipeptide(in) + 2 H(+)(in). The catalysed reaction is glycyl-L-leucine(out) + 2 H(+)(out) = glycyl-L-leucine(in) + 2 H(+)(in). It carries out the reaction glycyl-L-lysine(out) + 2 H(+)(out) = glycyl-L-lysine(in) + 2 H(+)(in). The enzyme catalyses glycyl-L-glutamate(out) + 3 H(+)(out) = glycyl-L-glutamate(in) + 3 H(+)(in). It catalyses the reaction L-alanyl-L-alanine(out) + 2 H(+)(out) = L-alanyl-L-alanine(in) + 2 H(+)(in). The catalysed reaction is an L-amino acid tripeptide(out) + 2 H(+)(out) = an L-amino acid tripeptide(in) + 2 H(+)(in). It carries out the reaction N-acetyl-D-muramoyl-L-alanyl-D-isoglutamine(out) + 3 H(+)(out) = N-acetyl-D-muramoyl-L-alanyl-D-isoglutamine(in) + 3 H(+)(in). The enzyme catalyses carnosine(out) + 2 H(+)(out) = carnosine(in) + 2 H(+)(in). In terms of biological role, proton-coupled amino-acid transporter that transports oligopeptides of 2 to 4 amino acids with a preference for dipeptides. Transports neutral and anionic dipeptides with a proton to peptide stoichiometry of 2:1 or 3:1. In kidney, involved in the absorption of circulating di- and tripeptides from the glomerular filtrate. Can also transport beta-lactam antibiotics, such as the aminocephalosporin cefadroxil, and other antiviral and anticancer drugs. Transports the dipeptide-like aminopeptidase inhibitor bestatin. Also able to transport carnosine. Involved in innate immunity by promoting the detection of microbial pathogens by NOD-like receptors (NLRs). Mediates transport of bacterial peptidoglycans across the plasma membrane or, in macrophages, the phagosome membrane: catalyzes the transport of certain bacterial peptidoglycans, such as muramyl dipeptide (MDP), the NOD2 ligand. This chain is Solute carrier family 15 member 2, found in Rattus norvegicus (Rat).